Consider the following 67-residue polypeptide: Large ribosomal subunit protein bL32 (67 aa).

Basic residues predominate over residues 1 to 19 (MAVPKRKMSRSNTRARRSQ). The disordered stretch occupies residues 1–21 (MAVPKRKMSRSNTRARRSQWK).

The protein belongs to the bacterial ribosomal protein bL32 family.

This is Large ribosomal subunit protein bL32 from Arthrobacter sp. (strain FB24).